A 425-amino-acid polypeptide reads, in one-letter code: Histidine--tRNA ligase (425 aa).

Belongs to the class-II aminoacyl-tRNA synthetase family. In terms of assembly, homodimer.

The protein localises to the cytoplasm. The catalysed reaction is tRNA(His) + L-histidine + ATP = L-histidyl-tRNA(His) + AMP + diphosphate + H(+). The chain is Histidine--tRNA ligase from Streptomyces coelicolor (strain ATCC BAA-471 / A3(2) / M145).